Consider the following 248-residue polypeptide: 2,3-bisphosphoglycerate-dependent phosphoglycerate mutase (248 aa).

Residues 10-17, 23-24, R62, 89-92, K100, 116-117, and 183-184 each bind substrate; these read RHGQSEWN, TG, ERHY, RR, and GN. Residue H11 is the Tele-phosphohistidine intermediate of the active site. The Proton donor/acceptor role is filled by E89.

This sequence belongs to the phosphoglycerate mutase family. BPG-dependent PGAM subfamily.

It catalyses the reaction (2R)-2-phosphoglycerate = (2R)-3-phosphoglycerate. It functions in the pathway carbohydrate degradation; glycolysis; pyruvate from D-glyceraldehyde 3-phosphate: step 3/5. Functionally, catalyzes the interconversion of 2-phosphoglycerate and 3-phosphoglycerate. This chain is 2,3-bisphosphoglycerate-dependent phosphoglycerate mutase, found in Corynebacterium diphtheriae (strain ATCC 700971 / NCTC 13129 / Biotype gravis).